Reading from the N-terminus, the 78-residue chain is Conotoxin Cal6.3a (78 aa).

The first 21 residues, Met1–Ala21, serve as a signal peptide directing secretion. The propeptide occupies Met22–Pro26. 3 cysteine pairs are disulfide-bonded: Cys38/Cys49, Cys41/Cys53, and Cys48/Cys56. The residue at position 76 (Gln76) is a Glutamine amide.

Expressed by the venom duct.

The protein resides in the secreted. Functionally, probable neurotoxin with unknown target. Possibly targets ion channels. The chain is Conotoxin Cal6.3a from Californiconus californicus (California cone).